Consider the following 147-residue polypeptide: D-aminoacyl-tRNA deacylase (147 aa).

Residues 137 to 138 (GP) carry the Gly-cisPro motif, important for rejection of L-amino acids motif.

The protein belongs to the DTD family. Homodimer.

The protein resides in the cytoplasm. The catalysed reaction is glycyl-tRNA(Ala) + H2O = tRNA(Ala) + glycine + H(+). It carries out the reaction a D-aminoacyl-tRNA + H2O = a tRNA + a D-alpha-amino acid + H(+). In terms of biological role, an aminoacyl-tRNA editing enzyme that deacylates mischarged D-aminoacyl-tRNAs. Also deacylates mischarged glycyl-tRNA(Ala), protecting cells against glycine mischarging by AlaRS. Acts via tRNA-based rather than protein-based catalysis; rejects L-amino acids rather than detecting D-amino acids in the active site. By recycling D-aminoacyl-tRNA to D-amino acids and free tRNA molecules, this enzyme counteracts the toxicity associated with the formation of D-aminoacyl-tRNA entities in vivo and helps enforce protein L-homochirality. Upon expression in B.subtilis strain 168 confers resistance to D-Tyr and D-Asp, suggesting it acts on both of these amino acids. The polypeptide is D-aminoacyl-tRNA deacylase (Bacillus amyloliquefaciens (Bacillus velezensis)).